Here is a 347-residue protein sequence, read N- to C-terminus: NADH-ubiquinone oxidoreductase chain 2 (347 aa).

11 consecutive transmembrane segments (helical) span residues 3-23 (PPILFTILLTVISGTMIVLMS), 25-45 (HWLMIWIGFEMNTLAIIPILM), 59-79 (YFLTQATASMILMMGITINLM), 96-116 (TMMTIALAMKLGLAPFHFWVP), 122-142 (VHMSSGLILLTWQKIAPLLVL), 149-169 (IDPNLLLPMAMMSVLIGGWGG), 178-198 (ILAYSSIAHMGWMATITLYNP), 200-220 (MMLLNLTIYIIMTLTTFMLFM), 242-262 (SLILMLMLSLGGLPPLSGFIP), 274-294 (EMIIMPTLLAITALLNLYFYM), and 323-343 (MILLPPLTVISTMLLPITPLL).

This sequence belongs to the complex I subunit 2 family. As to quaternary structure, core subunit of respiratory chain NADH dehydrogenase (Complex I) which is composed of 45 different subunits. Interacts with TMEM242.

It is found in the mitochondrion inner membrane. The enzyme catalyses a ubiquinone + NADH + 5 H(+)(in) = a ubiquinol + NAD(+) + 4 H(+)(out). Core subunit of the mitochondrial membrane respiratory chain NADH dehydrogenase (Complex I) that is believed to belong to the minimal assembly required for catalysis. Complex I functions in the transfer of electrons from NADH to the respiratory chain. The immediate electron acceptor for the enzyme is believed to be ubiquinone. The protein is NADH-ubiquinone oxidoreductase chain 2 of Suricata suricatta (Meerkat).